The following is a 1429-amino-acid chain: Inactive rhomboid protein 1 (1429 aa).

Disordered regions lie at residues 1–36 (MSSN…STRR), 560–579 (GNED…PDRP), and 740–766 (TSAL…QPGA). Topologically, residues 1–843 (MSSNGSDLGH…RPFFTYWINT (843 aa)) are cytoplasmic. A compositionally biased stretch (low complexity) spans 22 to 33 (SVHSSMRGSMSS). 2 stretches are compositionally biased toward polar residues: residues 564–573 (AGQSNGTNGN) and 740–763 (TSAL…SSHQ). The chain crosses the membrane as a helical span at residues 844-864 (VQVVVLILSIICYGIAPIGIG). The Lumenal segment spans residues 865-1099 (SEQKTGQVLV…PDQLYRLLTS (235 aa)). The chain crosses the membrane as a helical span at residues 1100-1120 (LCMHAGILHLAITLIFQHLFL). Over 1121 to 1131 (ADLERLIGTVR) the chain is Cytoplasmic. A helical membrane pass occupies residues 1132 to 1152 (TAIVYIMSGFAGNLTSAILVP). At 1153–1156 (HRPE) the chain is on the lumenal side. Residues 1157–1177 (VGPSASLSGVVASLIALLVWM) traverse the membrane as a helical segment. At 1178 to 1186 (HWKYLHKPH) the chain is on the cytoplasmic side. Residues 1187 to 1207 (IALFKLLLLCSVLVGIGTLPY) form a helical membrane-spanning segment. Over 1208–1210 (QLN) the chain is Lumenal. The helical transmembrane segment at 1211-1231 (FLGLLAGVICGCLLTMSLVPF) threads the bilayer. Over 1232–1245 (TTFSKYGRKKKINL) the chain is Cytoplasmic. A helical membrane pass occupies residues 1246–1266 (IWTCVLFHVVVYTAMIVTFYI). At 1267–1429 (HPSEFHSISF…INNNTEFNVL (163 aa)) the chain is on the lumenal side.

This sequence belongs to the peptidase S54 family. As to expression, specifically expressed in the nervous system and in brain.

It localises to the endoplasmic reticulum membrane. Its function is as follows. Rhomboid protease-like protein which has no protease activity but regulates the secretion of several ligands of the epidermal growth factor receptor. Indirectly activates the epidermal growth factor receptor signaling pathway and may thereby regulate sleep, cell survival, proliferation and migration. The protein is Inactive rhomboid protein 1 (rho-5) of Drosophila melanogaster (Fruit fly).